The primary structure comprises 423 residues: MQKAGAGGRRASDCGLAPHRPRCITKFAQYVGLLPCGRPGHPGERVAGAAAAVGAEDCPRRRAVILKFSLQGLKIYSGEGEVLLMAHALRRILYSTWCPADCQFAFVARNPRSPASKFFCHLFVGSQPGEVQILHLLLCRSFQLAYLLQHPEERAQPEPCPGPTGEVPLKPLSSSGGLVREPFGRDQLSQNVHALVSFRRLPAEGLVGSGKELPESEGRARHARLGNPYCSPTLVRKKAIRSKVIRSGAYRGCTYETQLQLSAREAFPAAWEAWPRGPGGHSCLVESEGSLTENIWAFAGISRPCALALLRRDVLGAFLLWPELGASGQWCLSVRTQCGVVPHQVFRNHLGRYCLEHLPAEFPSLEALVENHAVTERSLFCPLDMGRLNPTYEEQDCGPLGRPPRTLRPLSHAKSEAELQGLG.

The region spanning Ala28–Tyr146 is the PID domain. In terms of domain architecture, SH2 spans Trp296–Tyr392. Residues Glu394–Gly423 are disordered. Low complexity predominate over residues Gly398 to Leu410.

In terms of assembly, interacts with BCR.

It is found in the postsynaptic density. Functionally, may be involved in synaptic plasticity regulation through the control of Rac-GTP levels. This is SH2 domain-containing protein 5 from Pongo abelii (Sumatran orangutan).